The chain runs to 108 residues: ATP synthase peripheral stalk subunit F6, mitochondrial (108 aa).

The transit peptide at methionine 1 to phenylalanine 32 directs the protein to the mitochondrion. N6-acetyllysine is present on residues lysine 41 and lysine 46. At serine 65 the chain carries Phosphoserine. An N6-acetyllysine modification is found at lysine 79. N6-acetyllysine; alternate is present on residues lysine 94 and lysine 99. N6-succinyllysine; alternate occurs at positions 94 and 99. Position 105 is an N6-acetyllysine (lysine 105).

It belongs to the eukaryotic ATPase subunit F6 family. In terms of assembly, component of the ATP synthase complex composed at least of ATP5F1A/subunit alpha, ATP5F1B/subunit beta, ATP5MC1/subunit c (homooctomer), MT-ATP6/subunit a, MT-ATP8/subunit 8, ATP5ME/subunit e, ATP5MF/subunit f, ATP5MG/subunit g, ATP5MK/subunit k, ATP5MJ/subunit j, ATP5F1C/subunit gamma, ATP5F1D/subunit delta, ATP5F1E/subunit epsilon, ATP5PF/subunit F6, ATP5PB/subunit b, ATP5PD/subunit d, ATP5PO/subunit OSCP. ATP synthase complex consists of a soluble F(1) head domain (subunits alpha(3) and beta(3)) - the catalytic core - and a membrane F(0) domain - the membrane proton channel (subunits c, a, 8, e, f, g, k and j). These two domains are linked by a central stalk (subunits gamma, delta, and epsilon) rotating inside the F1 region and a stationary peripheral stalk (subunits F6, b, d, and OSCP).

The protein localises to the mitochondrion. The protein resides in the mitochondrion inner membrane. Subunit F6, of the mitochondrial membrane ATP synthase complex (F(1)F(0) ATP synthase or Complex V) that produces ATP from ADP in the presence of a proton gradient across the membrane which is generated by electron transport complexes of the respiratory chain. ATP synthase complex consist of a soluble F(1) head domain - the catalytic core - and a membrane F(1) domain - the membrane proton channel. These two domains are linked by a central stalk rotating inside the F(1) region and a stationary peripheral stalk. During catalysis, ATP synthesis in the catalytic domain of F(1) is coupled via a rotary mechanism of the central stalk subunits to proton translocation. In vivo, can only synthesize ATP although its ATP hydrolase activity can be activated artificially in vitro. Part of the complex F(0) domain. Part of the complex F(0) domain and the peripheric stalk, which acts as a stator to hold the catalytic alpha(3)beta(3) subcomplex and subunit a/ATP6 static relative to the rotary elements. The chain is ATP synthase peripheral stalk subunit F6, mitochondrial from Homo sapiens (Human).